Reading from the N-terminus, the 181-residue chain is Major urinary protein 11 (181 aa).

Residues M1–A19 form the signal peptide. A disulfide bond links C83 and C176.

It belongs to the calycin superfamily. Lipocalin family.

Its subcellular location is the secreted. Functionally, major urinary proteins (Mups) bind pheromones, and thus stabilize them to allow slow release into the air from urine marks. May protect pheromones from oxidation. May also act as pheromones themselves. In this context, they play a role in the regulation of social behaviors, such as aggression, mating, pup-suckling, territory establishment and dominance. Binds the pheromone analog 2-sec-butyl-4,5-dihydrothiazole (SBT) in vitro. The protein is Major urinary protein 11 of Mus musculus (Mouse).